A 540-amino-acid polypeptide reads, in one-letter code: Glucose-6-phosphate isomerase (540 aa).

Glutamate 350 serves as the catalytic Proton donor. Active-site residues include histidine 381 and lysine 503.

It belongs to the GPI family.

It is found in the cytoplasm. The enzyme catalyses alpha-D-glucose 6-phosphate = beta-D-fructose 6-phosphate. The protein operates within carbohydrate biosynthesis; gluconeogenesis. It participates in carbohydrate degradation; glycolysis; D-glyceraldehyde 3-phosphate and glycerone phosphate from D-glucose: step 2/4. Functionally, catalyzes the reversible isomerization of glucose-6-phosphate to fructose-6-phosphate. This chain is Glucose-6-phosphate isomerase, found in Paraburkholderia xenovorans (strain LB400).